The following is a 120-amino-acid chain: Secreted effector PIT2 (120 aa).

Positions 1–25 (MLFRSAFVLLIVAFASACLVQHVQA) are cleaved as a signal peptide. A PID14 protease inhibitor domain region spans residues 46–59 (KLNRRWWFGFTGSL).

As to quaternary structure, interacts with host cysteine proteases CP1A, CP1B, XCP2 and CP2. In terms of processing, cleaved by host target papain-like cysteine proteases (PLCPs) to release the embedded inhibitor peptide PID14.

Its subcellular location is the secreted. Its function is as follows. Secreted effector required for virulence. Functions as an inhibitor of a set of apoplastic maize papain-like cysteine proteases (PLCPs) including CP1A, CP1B, XCP2 and CP2, whose activity is directly linked with salicylic-acid-associated plant defenses. Acts as a substrate mimicking molecule for apoplastic PLCPs and its processing releases the embedded inhibitor peptide PID14, which in turn blocks PLCPs to modulate host immunity. In Mycosarcoma maydis (Corn smut fungus), this protein is Secreted effector PIT2.